The sequence spans 306 residues: tRNA dimethylallyltransferase (306 aa).

12 to 19 (GPTGVGKS) provides a ligand contact to ATP. A substrate-binding site is contributed by 14–19 (TGVGKS).

This sequence belongs to the IPP transferase family. Monomer. Requires Mg(2+) as cofactor.

It carries out the reaction adenosine(37) in tRNA + dimethylallyl diphosphate = N(6)-dimethylallyladenosine(37) in tRNA + diphosphate. Its function is as follows. Catalyzes the transfer of a dimethylallyl group onto the adenine at position 37 in tRNAs that read codons beginning with uridine, leading to the formation of N6-(dimethylallyl)adenosine (i(6)A). In Desulfatibacillum aliphaticivorans, this protein is tRNA dimethylallyltransferase.